The following is a 374-amino-acid chain: N-acetyldiaminopimelate deacetylase (374 aa).

Asp-69 is a catalytic residue. Glu-128 functions as the Proton acceptor in the catalytic mechanism.

Belongs to the peptidase M20A family. N-acetyldiaminopimelate deacetylase subfamily.

The catalysed reaction is N-acetyl-(2S,6S)-2,6-diaminopimelate + H2O = (2S,6S)-2,6-diaminopimelate + acetate. It participates in amino-acid biosynthesis; L-lysine biosynthesis via DAP pathway; LL-2,6-diaminopimelate from (S)-tetrahydrodipicolinate (acetylase route): step 3/3. Its function is as follows. Catalyzes the conversion of N-acetyl-diaminopimelate to diaminopimelate and acetate. This chain is N-acetyldiaminopimelate deacetylase, found in Bacillus velezensis (strain DSM 23117 / BGSC 10A6 / LMG 26770 / FZB42) (Bacillus amyloliquefaciens subsp. plantarum).